The following is a 358-amino-acid chain: Phosphoserine aminotransferase (358 aa).

Position 41 (Arg41) interacts with L-glutamate. Pyridoxal 5'-phosphate is bound by residues 75–76, Trp101, Thr150, Asp170, and Gln193; that span reads AR. Lys194 carries the N6-(pyridoxal phosphate)lysine modification. Residue 235–236 coordinates pyridoxal 5'-phosphate; it reads NT.

The protein belongs to the class-V pyridoxal-phosphate-dependent aminotransferase family. SerC subfamily. Homodimer. Pyridoxal 5'-phosphate serves as cofactor.

The protein resides in the cytoplasm. The enzyme catalyses O-phospho-L-serine + 2-oxoglutarate = 3-phosphooxypyruvate + L-glutamate. It catalyses the reaction 4-(phosphooxy)-L-threonine + 2-oxoglutarate = (R)-3-hydroxy-2-oxo-4-phosphooxybutanoate + L-glutamate. Its pathway is amino-acid biosynthesis; L-serine biosynthesis; L-serine from 3-phospho-D-glycerate: step 2/3. The protein operates within cofactor biosynthesis; pyridoxine 5'-phosphate biosynthesis; pyridoxine 5'-phosphate from D-erythrose 4-phosphate: step 3/5. In terms of biological role, catalyzes the reversible conversion of 3-phosphohydroxypyruvate to phosphoserine and of 3-hydroxy-2-oxo-4-phosphonooxybutanoate to phosphohydroxythreonine. In Histophilus somni (strain 129Pt) (Haemophilus somnus), this protein is Phosphoserine aminotransferase.